A 207-amino-acid polypeptide reads, in one-letter code: LexA repressor (207 aa).

The segment at residues 28 to 48 is a DNA-binding region (H-T-H motif); the sequence is RAEISRELGFKSANAAEEHLK. Active-site for autocatalytic cleavage activity residues include Ser123 and Lys160.

The protein belongs to the peptidase S24 family. As to quaternary structure, homodimer.

The enzyme catalyses Hydrolysis of Ala-|-Gly bond in repressor LexA.. Functionally, represses a number of genes involved in the response to DNA damage (SOS response), including recA and lexA. In the presence of single-stranded DNA, RecA interacts with LexA causing an autocatalytic cleavage which disrupts the DNA-binding part of LexA, leading to derepression of the SOS regulon and eventually DNA repair. In Haemophilus influenzae (strain ATCC 51907 / DSM 11121 / KW20 / Rd), this protein is LexA repressor.